The sequence spans 416 residues: Glutamyl-tRNA reductase (416 aa).

Substrate contacts are provided by residues 51-54, serine 110, 115-117, and glutamine 121; these read TCNR and EPQ. The Nucleophile role is filled by cysteine 52. Position 190 to 195 (190 to 195) interacts with NADP(+); that stretch reads GAGQTG.

Belongs to the glutamyl-tRNA reductase family. As to quaternary structure, homodimer.

It carries out the reaction (S)-4-amino-5-oxopentanoate + tRNA(Glu) + NADP(+) = L-glutamyl-tRNA(Glu) + NADPH + H(+). It functions in the pathway porphyrin-containing compound metabolism; protoporphyrin-IX biosynthesis; 5-aminolevulinate from L-glutamyl-tRNA(Glu): step 1/2. Functionally, catalyzes the NADPH-dependent reduction of glutamyl-tRNA(Glu) to glutamate 1-semialdehyde (GSA). The polypeptide is Glutamyl-tRNA reductase (Francisella tularensis subsp. holarctica (strain OSU18)).